A 211-amino-acid polypeptide reads, in one-letter code: MNGTMTSYCLALLGGYLLGSIPFGLILTRLSGAGDIRKIGSGNIGATNVLRTGRKGLAATTLLLDGGKGAAAALLAVHLGGWALALPAGIAAVIGHLFPVWLGFRGGKGVATGLGVLLATAWPVGLICCALWFAVARTIKISSAAALCAFAFAPLLALAVGGMGLGPPPLAQSHWQAAAAFMLIAVLVFLRHADNIARLRAGTESRIGTRS.

Helical transmembrane passes span 8–28, 84–104, 116–136, 145–165, and 170–190; these read YCLA…LILT, LALP…WLGF, VLLA…FAVA, AALC…GMGL, and LAQS…LVFL.

It belongs to the PlsY family. In terms of assembly, probably interacts with PlsX.

The protein localises to the cell inner membrane. It catalyses the reaction an acyl phosphate + sn-glycerol 3-phosphate = a 1-acyl-sn-glycero-3-phosphate + phosphate. Its pathway is lipid metabolism; phospholipid metabolism. In terms of biological role, catalyzes the transfer of an acyl group from acyl-phosphate (acyl-PO(4)) to glycerol-3-phosphate (G3P) to form lysophosphatidic acid (LPA). This enzyme utilizes acyl-phosphate as fatty acyl donor, but not acyl-CoA or acyl-ACP. In Granulibacter bethesdensis (strain ATCC BAA-1260 / CGDNIH1), this protein is Glycerol-3-phosphate acyltransferase.